The sequence spans 430 residues: UDP-N-acetylglucosamine 1-carboxyvinyltransferase (430 aa).

22–23 (KN) lines the phosphoenolpyruvate pocket. Arginine 102 contacts UDP-N-acetyl-alpha-D-glucosamine. Cysteine 126 acts as the Proton donor in catalysis. Cysteine 126 carries the post-translational modification 2-(S-cysteinyl)pyruvic acid O-phosphothioketal. Residues 131–135 (RPVDL), 172–175 (KVSV), aspartate 317, and isoleucine 339 contribute to the UDP-N-acetyl-alpha-D-glucosamine site.

Belongs to the EPSP synthase family. MurA subfamily.

The protein localises to the cytoplasm. The enzyme catalyses phosphoenolpyruvate + UDP-N-acetyl-alpha-D-glucosamine = UDP-N-acetyl-3-O-(1-carboxyvinyl)-alpha-D-glucosamine + phosphate. It participates in cell wall biogenesis; peptidoglycan biosynthesis. Its function is as follows. Cell wall formation. Adds enolpyruvyl to UDP-N-acetylglucosamine. This is UDP-N-acetylglucosamine 1-carboxyvinyltransferase from Sinorhizobium fredii (strain NBRC 101917 / NGR234).